The primary structure comprises 361 residues: Chorismate synthase (361 aa).

2 residues coordinate NADP(+): Arg-48 and Arg-54. Residues 125–127 (RSS), 238–239 (NA), Gly-278, 293–297 (KPTSS), and Arg-319 contribute to the FMN site.

The protein belongs to the chorismate synthase family. As to quaternary structure, homotetramer. FMNH2 serves as cofactor.

The catalysed reaction is 5-O-(1-carboxyvinyl)-3-phosphoshikimate = chorismate + phosphate. It participates in metabolic intermediate biosynthesis; chorismate biosynthesis; chorismate from D-erythrose 4-phosphate and phosphoenolpyruvate: step 7/7. In terms of biological role, catalyzes the anti-1,4-elimination of the C-3 phosphate and the C-6 proR hydrogen from 5-enolpyruvylshikimate-3-phosphate (EPSP) to yield chorismate, which is the branch point compound that serves as the starting substrate for the three terminal pathways of aromatic amino acid biosynthesis. This reaction introduces a second double bond into the aromatic ring system. This chain is Chorismate synthase, found in Sodalis glossinidius (strain morsitans).